The chain runs to 195 residues: Interferon tau-1 (195 aa).

An N-terminal signal peptide occupies residues 1-23 (MAFVLSLLMALVLVSYGPGGSLG). Cystine bridges form between Cys24–Cys122 and Cys52–Cys162.

This sequence belongs to the alpha/beta interferon family. IFN-alphaII subfamily. As to expression, constitutively and exclusively expressed in the mononuclear cells of the extraembryonic trophectoderm.

It is found in the secreted. In terms of biological role, paracrine hormone primarily responsible for maternal recognition of pregnancy. Interacts with endometrial receptors, probably type I interferon receptors, and blocks estrogen receptor expression, preventing the estrogen-induced increase in oxytocin receptor expression in the endometrium. This results in the suppression of the pulsatile endometrial release of the luteolytic hormone prostaglandin F2-alpha, hindering the regression of the corpus luteum (luteolysis) and therefore a return to ovarian cyclicity. This, and a possible direct effect of IFN-tau on prostaglandin synthesis, leads in turn to continued ovarian progesterone secretion, which stimulates the secretion by the endometrium of the nutrients required for the growth of the conceptus. In summary, displays particularly high antiviral and antiproliferative potency concurrently with particular weak cytotoxicity, high antiluteolytic activity and immunomodulatory properties. In contrast with other IFNs, IFN-tau is not virally inducible. In Ovis aries (Sheep), this protein is Interferon tau-1 (IFNT1).